The primary structure comprises 255 residues: 5'-nucleotidase SurE (255 aa).

Asp-7, Asp-8, Ser-38, and Asn-90 together coordinate a divalent metal cation.

It belongs to the SurE nucleotidase family. A divalent metal cation is required as a cofactor.

The protein localises to the cytoplasm. The catalysed reaction is a ribonucleoside 5'-phosphate + H2O = a ribonucleoside + phosphate. Its function is as follows. Nucleotidase that shows phosphatase activity on nucleoside 5'-monophosphates. The polypeptide is 5'-nucleotidase SurE (Picrophilus torridus (strain ATCC 700027 / DSM 9790 / JCM 10055 / NBRC 100828 / KAW 2/3)).